The chain runs to 186 residues: Casparian strip membrane protein 1 (186 aa).

Over 1-26 (MKGGSIELGEVSKNASTNKGVKRGLS) the chain is Cytoplasmic. The helical transmembrane segment at 27–47 (IMDFILRIIAGVATLASAVAM) threads the bilayer. Topologically, residues 48 to 72 (GTTDERLPFATSFVQFRAEYDDLPS) are extracellular. Residues 73–93 (FVFFVLANSIVCGYLALSLIL) form a helical membrane-spanning segment. Residues 94-107 (SILHIVRSTAVKSR) are Cytoplasmic-facing. The chain crosses the membrane as a helical span at residues 108-128 (ILLIVLDMVMMGLLAAAASAA). The Extracellular portion of the chain corresponds to 129–157 (ASIVYIAHYGNTQANWFPICQQYNSFCER). A helical transmembrane segment spans residues 158 to 178 (ISGSLIGSYIAVALFIIIILL). Topologically, residues 179–186 (SQSAISRN) are cytoplasmic.

This sequence belongs to the Casparian strip membrane proteins (CASP) family. In terms of assembly, homodimer and heterodimers.

Its subcellular location is the cell membrane. Functionally, regulates membrane-cell wall junctions and localized cell wall deposition. Required for establishment of the Casparian strip membrane domain (CSD) and the subsequent formation of Casparian strips, a cell wall modification of the root endodermis that determines an apoplastic barrier between the intraorganismal apoplasm and the extraorganismal apoplasm and prevents lateral diffusion. This is Casparian strip membrane protein 1 from Medicago truncatula (Barrel medic).